Reading from the N-terminus, the 279-residue chain is Phosphate import ATP-binding protein PstB 1 (279 aa).

Residues 26-274 (VMDCKLDKIF…PREQLTSDYI (249 aa)) enclose the ABC transporter domain. 59 to 66 (GPSGCGKS) contacts ATP.

This sequence belongs to the ABC transporter superfamily. Phosphate importer (TC 3.A.1.7) family. As to quaternary structure, the complex is composed of two ATP-binding proteins (PstB), two transmembrane proteins (PstC and PstA) and a solute-binding protein (PstS).

Its subcellular location is the cell inner membrane. It catalyses the reaction phosphate(out) + ATP + H2O = ADP + 2 phosphate(in) + H(+). Part of the ABC transporter complex PstSACB involved in phosphate import. Responsible for energy coupling to the transport system. This chain is Phosphate import ATP-binding protein PstB 1, found in Pseudomonas putida (strain ATCC 47054 / DSM 6125 / CFBP 8728 / NCIMB 11950 / KT2440).